A 273-amino-acid chain; its full sequence is 2,3,4,5-tetrahydropyridine-2,6-dicarboxylate N-succinyltransferase (273 aa).

Residues arginine 104 and aspartate 141 each coordinate substrate.

Belongs to the transferase hexapeptide repeat family. As to quaternary structure, homotrimer.

The protein resides in the cytoplasm. It catalyses the reaction (S)-2,3,4,5-tetrahydrodipicolinate + succinyl-CoA + H2O = (S)-2-succinylamino-6-oxoheptanedioate + CoA. Its pathway is amino-acid biosynthesis; L-lysine biosynthesis via DAP pathway; LL-2,6-diaminopimelate from (S)-tetrahydrodipicolinate (succinylase route): step 1/3. The protein is 2,3,4,5-tetrahydropyridine-2,6-dicarboxylate N-succinyltransferase of Nitrosomonas eutropha (strain DSM 101675 / C91 / Nm57).